A 633-amino-acid polypeptide reads, in one-letter code: Ankyrin repeat and SOCS box protein 2 (633 aa).

A UIM domain is found at 26-45 (SEDELVQMAIEQSLADKTRG). 12 ANK repeats span residues 102 to 131 (APVD…NLSE), 135 to 165 (EGWL…VIDQ), 169 to 198 (QEET…EPDI), 202 to 231 (SRET…DTNH), 235 to 264 (RGWT…KVEA), 268 to 297 (YGIT…DINT), 301 to 330 (DSAS…DANK), 334 to 363 (DGML…RTRV), 366 to 395 (SGIS…DVNA), 408 to 437 (RRSS…DPNR), 438 to 467 (DVIN…NIDA), and 474 to 502 (TAFP…NGEP). At S369 the chain carries Phosphoserine. In terms of domain architecture, SOCS box spans 579 to 633 (EDWAVIKEKAEPPRPLAHLCRLRVRKAIGKYRIKLLDTLPLPGRLIRYLKYENTQ).

The protein belongs to the ankyrin SOCS box (ASB) family. In terms of assembly, component of a probable ECS E3 ubiquitin-protein ligase complex which contains CUL5, either RBX1 or RNF7/RBX2, Elongin BC complex (ELOB and ELOC) and ASB2. Interacts with SKP2. Through its interaction with SKP2, likely to bridge the formation of dimeric E3-ubiquitin-protein ligase complexes composed of an ECS complex and an SCF(SKP2) complex. Interacts with JAK2; the interaction targets JAK2 for Notch-mediated proteasomal degradation. Interacts with TCF3/E2A; the interaction is mediated by SKP2 and targets TCF3 for Notch-mediated proteasomal degradation. Interacts with DES. Post-translationally, monoubiquitinated.

Its subcellular location is the cytoplasm. The protein localises to the cytoskeleton. It is found in the stress fiber. The protein resides in the myofibril. It localises to the sarcomere. Its subcellular location is the z line. It functions in the pathway protein modification; protein ubiquitination. Its function is as follows. Substrate-recognition component of a SCF-like ECS (Elongin-Cullin-SOCS-box protein) E3 ubiquitin-protein ligase complex which mediates the ubiquitination and subsequent proteasomal degradation of target proteins. Mediates Notch-induced ubiquitination and degradation of substrates including E2A and JAK2. Required during embryonic heart development for complete heart looping. Required for cardiomyocyte differentiation. Involved in myogenic differentiation and targets filamin FLNB for proteasomal degradation but not filamin FLNA. Also targets DES for proteasomal degradation. Acts as a negative regulator of skeletal muscle mass. This chain is Ankyrin repeat and SOCS box protein 2, found in Bos taurus (Bovine).